Consider the following 670-residue polypeptide: tRNA 5-methylaminomethyl-2-thiouridine biosynthesis bifunctional protein MnmC (670 aa).

The tract at residues 1 to 245 (MKPIAIQPAS…KREMLTGALS (245 aa)) is tRNA (mnm(5)s(2)U34)-methyltransferase. The tract at residues 271-670 (VGGGIASALL…RKLLKGRAAS (400 aa)) is FAD-dependent cmnm(5)s(2)U34 oxidoreductase.

In the N-terminal section; belongs to the methyltransferase superfamily. tRNA (mnm(5)s(2)U34)-methyltransferase family. The protein in the C-terminal section; belongs to the DAO family. The cofactor is FAD.

It is found in the cytoplasm. The enzyme catalyses 5-aminomethyl-2-thiouridine(34) in tRNA + S-adenosyl-L-methionine = 5-methylaminomethyl-2-thiouridine(34) in tRNA + S-adenosyl-L-homocysteine + H(+). Functionally, catalyzes the last two steps in the biosynthesis of 5-methylaminomethyl-2-thiouridine (mnm(5)s(2)U) at the wobble position (U34) in tRNA. Catalyzes the FAD-dependent demodification of cmnm(5)s(2)U34 to nm(5)s(2)U34, followed by the transfer of a methyl group from S-adenosyl-L-methionine to nm(5)s(2)U34, to form mnm(5)s(2)U34. This Cronobacter sakazakii (strain ATCC BAA-894) (Enterobacter sakazakii) protein is tRNA 5-methylaminomethyl-2-thiouridine biosynthesis bifunctional protein MnmC.